The sequence spans 597 residues: UvrABC system protein C (597 aa).

In terms of domain architecture, GIY-YIG spans 14 to 91; that stretch reads KKPGCYLWKD…INQYQPRFNL (78 aa).

This sequence belongs to the UvrC family. In terms of assembly, interacts with UvrB in an incision complex.

It is found in the cytoplasm. In terms of biological role, the UvrABC repair system catalyzes the recognition and processing of DNA lesions. UvrC both incises the 5' and 3' sides of the lesion. The N-terminal half is responsible for the 3' incision and the C-terminal half is responsible for the 5' incision. The polypeptide is UvrABC system protein C (Mycoplasma genitalium (strain ATCC 33530 / DSM 19775 / NCTC 10195 / G37) (Mycoplasmoides genitalium)).